The primary structure comprises 258 residues: ProSAAS (258 aa).

A signal peptide spans 1-33 (MAGSPLLCGPRAGGVGILVLLLLGLLRLPPTLS). Residues 34 to 213 (ARPVKEPRSL…SSEPEAAPAP (180 aa)) form a proSAAS(1-180) region. 3 disordered regions span residues 156-188 (PAPA…TPDV), 204-230 (SSEP…EVPP), and 239-258 (RVKR…LLPP). Over residues 177-188 (DVEDAGDETPDV) the composition is skewed to acidic residues. The span at 204-213 (SSEPEAAPAP) shows a compositional bias: low complexity. The segment at 219–258 (SVDQDLGPEVPPENVLGALLRVKRLENPSPQAPARRLLPP) is C-terminal inhibitory domain; interacts with PCSK1. The Sufficient for inhibition of PCSK1 signature appears at 237–242 (LLRVKR).

As to quaternary structure, interacts via the C-terminal inhibitory domain with PCSK1 66 kDa form. In terms of processing, proteolytically cleaved in the Golgi. Little SAAS, PEN, PEN-20 and Big LEN are the major processed peptides in proSAAS-overexpressing AtT-20 pituitary corticotropic cell line. In terms of tissue distribution, expressed in brain (mostly hypothalamus and pituitary) and gut. Expressed in trigeminal ganglia and neuroendocrine cell lines. As to expression, expressed in pancreas, spinal cord and brain (most abundant in striatum, hippocampus, pons and medulla, and cortex) (at protein level).

It is found in the secreted. The protein resides in the golgi apparatus. The protein localises to the trans-Golgi network. In terms of biological role, may function in the control of the neuroendocrine secretory pathway. Proposed be a specific endogenous inhibitor of PCSK1. ProSAAS and Big PEN-LEN, both containing the C-terminal inhibitory domain, but not the processed peptides reduce PCSK1 activity in the endoplasmic reticulum and Golgi. It reduces the activity of the 87 kDa form but not the autocatalytically derived 66 kDa form of PCSK1. Subsequent processing of proSAAS may eliminate the inhibition. Slows down convertase-mediated processing of proopiomelanocortin and proenkephalin. May control the intracellular timing of PCSK1 rather than its total level of activity. Endogenous ligand for GPR171. Neuropeptide involved in the regulation of feeding. Its function is as follows. Endogenous ligand for GPR171. Neuropeptide involved in the regulation of feeding. This is ProSAAS (Pcsk1n) from Mus musculus (Mouse).